The following is a 121-amino-acid chain: Small ribosomal subunit protein uS13 (121 aa).

The disordered stretch occupies residues 95–121; the sequence is LPMRGQRTRTNARTRKGPRKAAASLKK.

Belongs to the universal ribosomal protein uS13 family. Part of the 30S ribosomal subunit. Forms a loose heterodimer with protein S19. Forms two bridges to the 50S subunit in the 70S ribosome.

In terms of biological role, located at the top of the head of the 30S subunit, it contacts several helices of the 16S rRNA. In the 70S ribosome it contacts the 23S rRNA (bridge B1a) and protein L5 of the 50S subunit (bridge B1b), connecting the 2 subunits; these bridges are implicated in subunit movement. Contacts the tRNAs in the A and P-sites. The sequence is that of Small ribosomal subunit protein uS13 from Polaromonas naphthalenivorans (strain CJ2).